The sequence spans 513 residues: Putative ribose/galactose/methyl galactoside import ATP-binding protein 2 (513 aa).

ABC transporter domains lie at 24–260 (LAAD…VGRE) and 270–510 (VPIG…VMDL). ATP is bound at residue 56-63 (GENGAGKS).

The protein belongs to the ABC transporter superfamily. Carbohydrate importer 2 (CUT2) (TC 3.A.1.2) family.

Its subcellular location is the cell inner membrane. It catalyses the reaction D-ribose(out) + ATP + H2O = D-ribose(in) + ADP + phosphate + H(+). The catalysed reaction is D-galactose(out) + ATP + H2O = D-galactose(in) + ADP + phosphate + H(+). Its function is as follows. Part of an ABC transporter complex involved in carbohydrate import. Could be involved in ribose, galactose and/or methyl galactoside import. Responsible for energy coupling to the transport system. The sequence is that of Putative ribose/galactose/methyl galactoside import ATP-binding protein 2 from Agrobacterium fabrum (strain C58 / ATCC 33970) (Agrobacterium tumefaciens (strain C58)).